The sequence spans 632 residues: ATP-dependent zinc metalloprotease FtsH (632 aa).

Residues 1–9 (MKPTNEPKK) lie on the Cytoplasmic side of the membrane. Residues 10 to 30 (PFFQSPIILAVLGGILLIFFL) traverse the membrane as a helical segment. Residues 31–116 (RSFNSDGSFS…INYSGFSESN (86 aa)) are Periplasmic-facing. Residues 117 to 137 (FFTDMLGWLMPILVILGLWMF) traverse the membrane as a helical segment. Residues 138 to 632 (MANRMQKNMG…RLIPLEEQAS (495 aa)) lie on the Cytoplasmic side of the membrane. ATP-binding positions include Ala-173, 213 to 217 (GTGKT), and His-354. His-434 contributes to the Zn(2+) binding site. Glu-435 is an active-site residue. Residues His-438 and Asp-511 each contribute to the Zn(2+) site.

It in the central section; belongs to the AAA ATPase family. This sequence in the C-terminal section; belongs to the peptidase M41 family. Homohexamer. Zn(2+) serves as cofactor.

The protein resides in the cell inner membrane. Its function is as follows. Acts as a processive, ATP-dependent zinc metallopeptidase for both cytoplasmic and membrane proteins. Plays a role in the quality control of integral membrane proteins. The protein is ATP-dependent zinc metalloprotease FtsH of Helicobacter pylori (strain ATCC 700392 / 26695) (Campylobacter pylori).